The primary structure comprises 391 residues: Formate-dependent phosphoribosylglycinamide formyltransferase (391 aa).

N(1)-(5-phospho-beta-D-ribosyl)glycinamide contacts are provided by residues 18–19 and Glu78; that span reads EL. ATP is bound by residues Arg110, Lys151, 156 to 161, 191 to 194, and Glu199; these read SSGKGQ and EEFI. An ATP-grasp domain is found at 115 to 305; it reads ELAHEELGIR…EFELHLRAIL (191 aa). Residues Glu264 and Glu276 each contribute to the Mg(2+) site. N(1)-(5-phospho-beta-D-ribosyl)glycinamide-binding positions include Asp283, Lys353, and 360 to 361; that span reads RR.

It belongs to the PurK/PurT family. Homodimer.

The enzyme catalyses N(1)-(5-phospho-beta-D-ribosyl)glycinamide + formate + ATP = N(2)-formyl-N(1)-(5-phospho-beta-D-ribosyl)glycinamide + ADP + phosphate + H(+). It participates in purine metabolism; IMP biosynthesis via de novo pathway; N(2)-formyl-N(1)-(5-phospho-D-ribosyl)glycinamide from N(1)-(5-phospho-D-ribosyl)glycinamide (formate route): step 1/1. In terms of biological role, involved in the de novo purine biosynthesis. Catalyzes the transfer of formate to 5-phospho-ribosyl-glycinamide (GAR), producing 5-phospho-ribosyl-N-formylglycinamide (FGAR). Formate is provided by PurU via hydrolysis of 10-formyl-tetrahydrofolate. The chain is Formate-dependent phosphoribosylglycinamide formyltransferase from Trichormus variabilis (strain ATCC 29413 / PCC 7937) (Anabaena variabilis).